Here is a 465-residue protein sequence, read N- to C-terminus: MATNVGGAVDNSRRSISDNRHDPEKPAELPDTLSGSETERPQDANPEAALDQQASDAAKAHDEGPPDGGTAAWMVVLGAWCCSFCSPGWINSMGSFQEYYQREPLKDYSSSEIAWIPSLEIFFLFGLGPIVGIIFDRYGPRPLIIGGTIFHVFGLMMASLAKTYYQFLLSQGVCSAIGVACLYSPALACISTWFLKRRGAAMGIMATGSSVGGVIFPIMITRMIERNGYPWALRTAAFLILGLQVIACLTVRPRQKPVPKKLPAGRLAAPFTEPAFALLLAGIFILTYGMYIPIDYLPLSGLQEAHMSVNMSQYLVAIMNAASLFGRLGAGYGADIIGRWNMFIIACGVTGISNLAVWIPATKSSITIGYAIMFGFASGAFVSLVGALPVSVSPIPELGYRMGIVFLVISIPALTMAPIGGAILQHASNGWVSLKVFAGVMCLVGSAIILGSRMLYTEKRLIKAF.

Residues 1 to 66 are disordered; the sequence is MATNVGGAVD…AAKAHDEGPP (66 aa). Positions 11 to 28 are enriched in basic and acidic residues; sequence NSRRSISDNRHDPEKPAE. 7 helical membrane-spanning segments follow: residues 70 to 90, 115 to 135, 142 to 162, 175 to 195, 200 to 220, 231 to 251, and 274 to 294; these read TAAWMVVLGAWCCSFCSPGWI, WIPSLEIFFLFGLGPIVGIIF, PLIIGGTIFHVFGLMMASLAK, SAIGVACLYSPALACISTWFL, AAMGIMATGSSVGGVIFPIMI, WALRTAAFLILGLQVIACLTV, and PAFALLLAGIFILTYGMYIPI. N-linked (GlcNAc...) asparagine glycosylation occurs at Asn-310. A run of 5 helical transmembrane segments spans residues 314–334, 342–362, 368–388, 404–424, and 430–450; these read YLVAIMNAASLFGRLGAGYGA, MFIIACGVTGISNLAVWIPAT, IGYAIMFGFASGAFVSLVGAL, IVFLVISIPALTMAPIGGAIL, and GWVSLKVFAGVMCLVGSAIIL.

The protein belongs to the major facilitator superfamily. Monocarboxylate porter (TC 2.A.1.13) family.

The protein resides in the cell membrane. In terms of biological role, efflux pump that may be involved in the secretion of fujikurins. The protein is Fujikurins efflux protein FFUJ_12242 of Gibberella fujikuroi (strain CBS 195.34 / IMI 58289 / NRRL A-6831) (Bakanae and foot rot disease fungus).